Here is a 167-residue protein sequence, read N- to C-terminus: Translation initiation factor IF-3 (167 aa).

This sequence belongs to the IF-3 family. Monomer.

It localises to the cytoplasm. In terms of biological role, IF-3 binds to the 30S ribosomal subunit and shifts the equilibrium between 70S ribosomes and their 50S and 30S subunits in favor of the free subunits, thus enhancing the availability of 30S subunits on which protein synthesis initiation begins. This is Translation initiation factor IF-3 from Bacillus anthracis.